The sequence spans 49 residues: Large ribosomal subunit protein bL33B (49 aa).

This sequence belongs to the bacterial ribosomal protein bL33 family.

This Exiguobacterium sibiricum (strain DSM 17290 / CCUG 55495 / CIP 109462 / JCM 13490 / 255-15) protein is Large ribosomal subunit protein bL33B.